A 193-amino-acid polypeptide reads, in one-letter code: DNA damage-inducible transcript 4-like protein (193 aa).

The protein belongs to the DDIT4 family.

The protein resides in the cytoplasm. Functionally, inhibits cell growth by regulating the TOR signaling pathway upstream of the TSC1-TSC2 complex and downstream of AKT1. In Mus musculus (Mouse), this protein is DNA damage-inducible transcript 4-like protein (Ddit4l).